The chain runs to 199 residues: Imidazoleglycerol-phosphate dehydratase (199 aa).

The protein belongs to the imidazoleglycerol-phosphate dehydratase family.

It localises to the cytoplasm. The catalysed reaction is D-erythro-1-(imidazol-4-yl)glycerol 3-phosphate = 3-(imidazol-4-yl)-2-oxopropyl phosphate + H2O. The protein operates within amino-acid biosynthesis; L-histidine biosynthesis; L-histidine from 5-phospho-alpha-D-ribose 1-diphosphate: step 6/9. The sequence is that of Imidazoleglycerol-phosphate dehydratase from Methylibium petroleiphilum (strain ATCC BAA-1232 / LMG 22953 / PM1).